The chain runs to 373 residues: tRNA-specific 2-thiouridylase MnmA (373 aa).

ATP is bound by residues 12–19 (GMSGGVDS) and Met38. The interval 98 to 100 (NPD) is interaction with target base in tRNA. The active-site Nucleophile is the Cys103. Cys103 and Cys200 are disulfide-bonded. ATP is bound at residue Gly127. The interaction with tRNA stretch occupies residues 150 to 152 (KDQ). Cys200 serves as the catalytic Cysteine persulfide intermediate. The tract at residues 312-313 (RY) is interaction with tRNA.

The protein belongs to the MnmA/TRMU family.

It localises to the cytoplasm. It carries out the reaction S-sulfanyl-L-cysteinyl-[protein] + uridine(34) in tRNA + AH2 + ATP = 2-thiouridine(34) in tRNA + L-cysteinyl-[protein] + A + AMP + diphosphate + H(+). Functionally, catalyzes the 2-thiolation of uridine at the wobble position (U34) of tRNA, leading to the formation of s(2)U34. This chain is tRNA-specific 2-thiouridylase MnmA, found in Streptococcus pyogenes serotype M2 (strain MGAS10270).